The sequence spans 37 residues: Cytochrome b6-f complex subunit 5 (37 aa).

The chain crosses the membrane as a helical span at residues 5–25 (LLSGVVLGLILVTLSGLFFAA).

It belongs to the PetG family. As to quaternary structure, the 4 large subunits of the cytochrome b6-f complex are cytochrome b6, subunit IV (17 kDa polypeptide, PetD), cytochrome f and the Rieske protein, while the 4 small subunits are PetG, PetL, PetM and PetN. The complex functions as a dimer.

The protein localises to the cellular thylakoid membrane. Its function is as follows. Component of the cytochrome b6-f complex, which mediates electron transfer between photosystem II (PSII) and photosystem I (PSI), cyclic electron flow around PSI, and state transitions. PetG is required for either the stability or assembly of the cytochrome b6-f complex. The protein is Cytochrome b6-f complex subunit 5 of Trichodesmium erythraeum (strain IMS101).